We begin with the raw amino-acid sequence, 534 residues long: ATP synthase subunit beta 2 (534 aa).

185–192 (GGAGVGKT) provides a ligand contact to ATP. Positions 494–505 (AAAREADARREA) are enriched in basic and acidic residues. A disordered region spans residues 494–534 (AAAREADARREAAAAASGAGPGTTSDPASGSAEPQGARHGR).

This sequence belongs to the ATPase alpha/beta chains family. In terms of assembly, F-type ATPases have 2 components, CF(1) - the catalytic core - and CF(0) - the membrane proton channel. CF(1) has five subunits: alpha(3), beta(3), gamma(1), delta(1), epsilon(1). CF(0) has three main subunits: a(1), b(2) and c(9-12). The alpha and beta chains form an alternating ring which encloses part of the gamma chain. CF(1) is attached to CF(0) by a central stalk formed by the gamma and epsilon chains, while a peripheral stalk is formed by the delta and b chains.

It localises to the cell inner membrane. It catalyses the reaction ATP + H2O + 4 H(+)(in) = ADP + phosphate + 5 H(+)(out). Its function is as follows. Produces ATP from ADP in the presence of a proton gradient across the membrane. The catalytic sites are hosted primarily by the beta subunits. The protein is ATP synthase subunit beta 2 of Burkholderia mallei (strain NCTC 10247).